We begin with the raw amino-acid sequence, 430 residues long: Endochitinase 46 (430 aa).

The first 22 residues, 1-22, serve as a signal peptide directing secretion; the sequence is MLSFLGKSVALLAALQATLSSA. Residues 23-35 constitute a propeptide that is removed on maturation; it reads SPLATEERSIEKR. In terms of domain architecture, GH18 spans 39–408; the sequence is YANSVYFTNW…GTSHRALGGL (370 aa). Residues 103 to 104 and 130 to 133 each bind chitin; these read GT and GGWT. Glutamate 172 acts as the Proton donor in catalysis. Tyrosine 173 serves as a coordination point for chitin. An N-linked (GlcNAc...) asparagine glycan is attached at asparagine 219. Chitin contacts are provided by residues 238-241 and tryptophan 385; that span reads MAYD.

This sequence belongs to the glycosyl hydrolase 18 family. Chitinase class V subfamily.

It localises to the secreted. The catalysed reaction is Random endo-hydrolysis of N-acetyl-beta-D-glucosaminide (1-&gt;4)-beta-linkages in chitin and chitodextrins.. In terms of biological role, secreted chitinase involved in the degradation of chitin, a component of the cell walls of fungi and exoskeletal elements of some animals (including worms and arthropods). Plays a morphogenetic role during apical growth, cell division and differentiation (cell wall morphogenesis). Also acts as an antifungal agent. Involved in the degradation and further assimilation of phytopathogenic fungi, namely mycoparasitism, the major mechanism accounting for the antagonistic activity against phytopathogenic fungi displayed by Trichoderma. The sequence is that of Endochitinase 46 (chit46) from Trichoderma harzianum (Hypocrea lixii).